We begin with the raw amino-acid sequence, 103 residues long: Small ribosomal subunit protein uS10 (103 aa).

It belongs to the universal ribosomal protein uS10 family. Part of the 30S ribosomal subunit.

Involved in the binding of tRNA to the ribosomes. This chain is Small ribosomal subunit protein uS10, found in Campylobacter jejuni subsp. jejuni serotype O:6 (strain 81116 / NCTC 11828).